We begin with the raw amino-acid sequence, 618 residues long: MIPSSSPMESRHRLSFSNEKTSRRRFQRIEKGVKFNTLKLVLICIMLGALFTIYRFRYPPLQIPEIPTSFGLTTDPRYVATAEINWNHMSNLVEKHVFGRSEYQGIGLINLNDNEIDRFKEVTKSDCDHVALHLDYAAKNITWESLYPEWIDEVEEFEVPTCPSLPLIQIPGKPRIDLVIAKLPCDKSGKWSRDVARLHLQLAAARVAASSKGLHNVHVILVSDCFPIPNLFTGQELVARQGNIWLYKPNLHQLRQKLQLPVGSCELSVPLQAKDNFYSAGAKKEAYATILHSAQFYVCGAIAAAQSIRMSGSTRDLVILVDETISEYHKSGLVAAGWKIQMFQRIRNPNAVPNAYNEWNYSKFRLWQLTEYSKIIFIDADMLILRNIDFLFEFPEISATGNNATLFNSGLMVVEPSNSTFQLLMDNINEVVSYNGGDQGYLNEIFTWWHRIPKHMNFLKHFWEGDEPEIKKMKTSLFGADPPILYVLHYLGYNKPWLCFRDYDCNWNVDIFQEFASDEAHKTWWRVHDAMPENLHKFCLLRSKQKAQLEWDRRQAEKGNYKDGHWKIKIKDKRLKTCFEDFCFWESMLWHWGETNSTNNSSTTTTSSPPHKTALPSL.

The chain crosses the membrane as a helical; Signal-anchor for type II membrane protein span at residues 32-54 (GVKFNTLKLVLICIMLGALFTIY). The Mn(2+) site is built by Asp-379 and Asp-381. Residues 379-381 (DAD), 408-410 (NSG), 435-439 (NGGDQ), and 489-495 (HYLGYNK) contribute to the substrate site. Residue His-489 coordinates Mn(2+). The span at 598–608 (TNNSSTTTTSS) shows a compositional bias: low complexity. Residues 598-618 (TNNSSTTTTSSPPHKTALPSL) are disordered.

This sequence belongs to the glycosyltransferase 8 family. Glycogenin subfamily. Mn(2+) is required as a cofactor.

Its subcellular location is the golgi apparatus membrane. Functionally, may be involved in the substitutions of the xylan backbone in stem glucuronoxylan. The chain is Putative UDP-glucuronate:xylan alpha-glucuronosyltransferase 3 (GUX3) from Arabidopsis thaliana (Mouse-ear cress).